A 135-amino-acid chain; its full sequence is MQFERADRVAEEIKKEISDIIQHELKDPRICAELISIVKVNMSKDLRHAKVFVSIFDKNRENITSTMKALENAKPYIRREISRRINLRFSPEISFELDDSIEYGARISQILNQLNIAKDEEEEKSQDESEGEQEN.

The protein belongs to the RbfA family. Monomer. Binds 30S ribosomal subunits, but not 50S ribosomal subunits or 70S ribosomes.

It is found in the cytoplasm. In terms of biological role, one of several proteins that assist in the late maturation steps of the functional core of the 30S ribosomal subunit. Associates with free 30S ribosomal subunits (but not with 30S subunits that are part of 70S ribosomes or polysomes). Required for efficient processing of 16S rRNA. May interact with the 5'-terminal helix region of 16S rRNA. The sequence is that of Ribosome-binding factor A from Caldicellulosiruptor saccharolyticus (strain ATCC 43494 / DSM 8903 / Tp8T 6331).